A 329-amino-acid polypeptide reads, in one-letter code: Bifunctional nuclease 2 (329 aa).

In terms of domain architecture, BFN spans 121-256; the sequence is CVHNNPQGGN…YLAYSDGMRV (136 aa). The UVR domain maps to 287–322; it reads DTKEFDLVRNMMQAVDEERYDEAAEWRDKLGKFQAK.

Belongs to the bifunctional nuclease family.

It localises to the nucleus. Its function is as follows. Bifunctional nuclease with both RNase and DNase activities. Involved in basal defense response. Participates in abscisic acid-derived callose deposition following infection by a necrotrophic pathogen. This chain is Bifunctional nuclease 2 (BBD2), found in Arabidopsis thaliana (Mouse-ear cress).